The chain runs to 396 residues: MNVLNRRQALQRALLNGKNKQDAYHPFPWYESMRKDAPVSFDEENQVWSVFLYDDVKKVVGDKELFSSCMPQQTSSIGNSIINMDPPKHTKIRSVVNKAFTPRVMKQWEPRIQEITDELIQKFQGRSEFDLVHDFSYPLPVIVISELLGVPSAHMEQFKAWSDLLVSTPKDKSEEAEKAFLEERDKCEEELAAFFAGIIEEKRNKPEQDIISILVEAEETGEKLSGEELIPFCTLLLVAGNETTTNLISNAMYSILETPGVYEELRSHPELMPQAVEEALRFRAPAPVLRRIAKRDTEIGGHLIKEGDMVLAFVASANRDEAKFDRPHMFDIRRHPNPHIAFGHGIHFCLGAPLARLEANIALTSLISAFPHMECVSITPIENSVIYGLKSFRVKM.

Position 349 (C349) interacts with heme.

Belongs to the cytochrome P450 family. The cofactor is heme.

The polypeptide is Putative cytochrome P450 YjiB (yjiB) (Bacillus subtilis (strain 168)).